The primary structure comprises 398 residues: CCA-adding enzyme (398 aa).

2 residues coordinate ATP: Gly32 and Arg35. CTP-binding residues include Gly32 and Arg35. Positions 45 and 47 each coordinate Mg(2+). ATP contacts are provided by Arg119, Asp162, Arg165, Arg168, and Arg171. CTP contacts are provided by Arg119, Asp162, Arg165, Arg168, and Arg171.

The protein belongs to the tRNA nucleotidyltransferase/poly(A) polymerase family. Bacterial CCA-adding enzyme type 3 subfamily. In terms of assembly, homodimer. Mg(2+) is required as a cofactor.

It carries out the reaction a tRNA precursor + 2 CTP + ATP = a tRNA with a 3' CCA end + 3 diphosphate. The catalysed reaction is a tRNA with a 3' CCA end + 2 CTP + ATP = a tRNA with a 3' CCACCA end + 3 diphosphate. In terms of biological role, catalyzes the addition and repair of the essential 3'-terminal CCA sequence in tRNAs without using a nucleic acid template. Adds these three nucleotides in the order of C, C, and A to the tRNA nucleotide-73, using CTP and ATP as substrates and producing inorganic pyrophosphate. tRNA 3'-terminal CCA addition is required both for tRNA processing and repair. Also involved in tRNA surveillance by mediating tandem CCA addition to generate a CCACCA at the 3' terminus of unstable tRNAs. While stable tRNAs receive only 3'-terminal CCA, unstable tRNAs are marked with CCACCA and rapidly degraded. The protein is CCA-adding enzyme of Lactococcus lactis subsp. lactis (strain IL1403) (Streptococcus lactis).